Reading from the N-terminus, the 133-residue chain is Large-conductance mechanosensitive channel (133 aa).

Transmembrane regions (helical) follow at residues 14 to 34 (VVDL…VTTL) and 73 to 93 (FITV…MVVV).

This sequence belongs to the MscL family. Homopentamer.

The protein resides in the cell membrane. Functionally, channel that opens in response to stretch forces in the membrane lipid bilayer. May participate in the regulation of osmotic pressure changes within the cell. The polypeptide is Large-conductance mechanosensitive channel (Renibacterium salmoninarum (strain ATCC 33209 / DSM 20767 / JCM 11484 / NBRC 15589 / NCIMB 2235)).